Consider the following 305-residue polypeptide: MVIMARPYWSGQLRISLVSFGISLIPATESKSEIHFHEIDRETGQRVRHQKVLPESGEAVENREIVKGYEYSKGKYIPVEPEDIQNLRVASSKTIDLEQFVTVDEIDPACYEKPYFVLPENASQAEAFAVVRKALEETGKAGIGKIALAGREHLVAICAPGNPRLLGLMAYTLRFAEEMRSAEQYFAGIEAGKVDPEQLSLARELIQRKSSSFDLKKFKDEYETALRELVDARLKHVALPRQEVATARGKVIDLMDALRRSVGEENGRKKSVSGAQHRSRRKSKGEQKLKVVRSGSSSDKRRKSA.

One can recognise a Ku domain in the interval 16 to 202 (SLVSFGISLI…KVDPEQLSLA (187 aa)). Positions 263-305 (GEENGRKKSVSGAQHRSRRKSKGEQKLKVVRSGSSSDKRRKSA) are disordered.

Belongs to the prokaryotic Ku family. In terms of assembly, homodimer. Interacts with LigD.

Functionally, with LigD forms a non-homologous end joining (NHEJ) DNA repair enzyme, which repairs dsDNA breaks with reduced fidelity. Binds linear dsDNA with 5'- and 3'- overhangs but not closed circular dsDNA nor ssDNA. Recruits and stimulates the ligase activity of LigD. In Acidobacterium capsulatum (strain ATCC 51196 / DSM 11244 / BCRC 80197 / JCM 7670 / NBRC 15755 / NCIMB 13165 / 161), this protein is Non-homologous end joining protein Ku.